The following is a 158-amino-acid chain: Transcription elongation factor GreA (158 aa).

Belongs to the GreA/GreB family.

Its function is as follows. Necessary for efficient RNA polymerase transcription elongation past template-encoded arresting sites. The arresting sites in DNA have the property of trapping a certain fraction of elongating RNA polymerases that pass through, resulting in locked ternary complexes. Cleavage of the nascent transcript by cleavage factors such as GreA or GreB allows the resumption of elongation from the new 3'terminus. GreA releases sequences of 2 to 3 nucleotides. The protein is Transcription elongation factor GreA of Psychrobacter arcticus (strain DSM 17307 / VKM B-2377 / 273-4).